The sequence spans 553 residues: Zinc finger matrin-type protein 1 (553 aa).

A disordered region spans residues 16–36 (TPSSPAATCSGPMAGGDTSSN). 4 consecutive Matrin-type zinc fingers follow at residues 61–91 (TFCK…KVRL), 125–155 (KFCG…KMRQ), 223–253 (KYCK…NQAR), and 275–305 (YVCP…KESM). 2 disordered regions span residues 341-402 (QFRQ…DQRV) and 428-553 (HISR…ILGF). Acidic residues predominate over residues 350–362 (DSCDYEEEEEQEP). The span at 431–453 (RSPTSQDSSDNSSGSSSDESSGS) shows a compositional bias: low complexity. A compositionally biased stretch (basic residues) spans 456 to 476 (KDKRRKRKHHRESRLRGSGRI). Residues 477–513 (RRGDENSEKRKRKGEDADSGKEDNKHDRGKTSGGDKD) are compositionally biased toward basic and acidic residues.

Its subcellular location is the nucleus. This Xenopus tropicalis (Western clawed frog) protein is Zinc finger matrin-type protein 1 (zmat1).